We begin with the raw amino-acid sequence, 494 residues long: GTPase Der (494 aa).

2 EngA-type G domains span residues 3–166 (PVIA…MDAE) and 207–380 (IKLA…DCST). GTP-binding positions include 9–16 (GRPNVGKS), 56–60 (DTGGI), 118–121 (NKTD), 213–220 (GRPNVGKS), 260–264 (DTAGV), and 325–328 (NKWD). The KH-like domain maps to 381–465 (KRVGTSLLTR…PIRIQFKEGE (85 aa)).

Belongs to the TRAFAC class TrmE-Era-EngA-EngB-Septin-like GTPase superfamily. EngA (Der) GTPase family. In terms of assembly, associates with the 50S ribosomal subunit.

Functionally, GTPase that plays an essential role in the late steps of ribosome biogenesis. The chain is GTPase Der from Yersinia enterocolitica serotype O:8 / biotype 1B (strain NCTC 13174 / 8081).